The following is a 72-amino-acid chain: Alpha-mammal toxin Bot3 (72 aa).

Positions 1-8 (LVMAGVES) are cleaved as a signal peptide. The 63-residue stretch at 10-72 (KDGYIVDDRN…VRTKGPGRCN (63 aa)) folds into the LCN-type CS-alpha/beta domain. 4 disulfides stabilise this stretch: cysteine 20–cysteine 71, cysteine 24–cysteine 44, cysteine 30–cysteine 54, and cysteine 34–cysteine 56. At asparagine 72 the chain carries Asparagine amide.

Belongs to the long (4 C-C) scorpion toxin superfamily. Sodium channel inhibitor family. Alpha subfamily. When the toxin is not amidated, there are 75% loss of toxicity to mice, and total incapacity to bind rat brain synaptosomes. As to expression, expressed by the venom gland.

The protein resides in the secreted. In terms of biological role, alpha toxins bind voltage-independently at site-3 of sodium channels (Nav) and inhibit the inactivation of the activated channels, thereby blocking neuronal transmission. Is active against mammals and binds with high affinity to rat brain synaptosomes. The sequence is that of Alpha-mammal toxin Bot3 from Buthus occitanus tunetanus (Common European scorpion).